The following is a 407-amino-acid chain: Protein RecA (407 aa).

79 to 86 contacts ATP; sequence GPESSGKT. Residues 358–407 form a disordered region; that stretch reads LSLEASPEESDAKTLRRXASRGAGASSSRVQEGSAANDHFQDESTTAKLL. Residues 377–386 show a composition bias toward low complexity; that stretch reads SRGAGASSSR.

Belongs to the RecA family.

Its subcellular location is the cytoplasm. Its function is as follows. Can catalyze the hydrolysis of ATP in the presence of single-stranded DNA, the ATP-dependent uptake of single-stranded DNA by duplex DNA, and the ATP-dependent hybridization of homologous single-stranded DNAs. It interacts with LexA causing its activation and leading to its autocatalytic cleavage. The polypeptide is Protein RecA (Treponema pallidum (strain Nichols)).